Consider the following 509-residue polypeptide: DNA primase large subunit (509 aa).

The segment at 253 to 270 (LSHSYTGQDYSTQGNVGK) is interdomain linker. The tract at residues 266–509 (GNVGKISLDQ…GLEDYFSEDS (244 aa)) is interacts with PRIM1. Residues cysteine 287, cysteine 367, cysteine 384, and cysteine 424 each contribute to the [4Fe-4S] cluster site. The segment at 300 to 442 (HLRHGGRMQY…NVDDCGFSLN (143 aa)) is RNA:DNA duplex-binding. The tract at residues 461 to 486 (IKKEPIQPETPQPKPSVQKTKDASSA) is disordered. A Phosphothreonine modification is found at threonine 470.

Belongs to the eukaryotic-type primase large subunit family. As to quaternary structure, heterodimer of a catalytic subunit PRIM1 and a regulatory subunit PRIM2, also known as the DNA primase complex. Interacts via (C-terminus) with PRIM1. Component of the alpha DNA polymerase complex (also known as the alpha DNA polymerase-primase complex) consisting of four subunits: the catalytic subunit POLA1, the regulatory subunit POLA2, and the primase complex subunits PRIM1 and PRIM2 respectively. Within the complex, POLA1 directly interacts with PRIM2. [4Fe-4S] cluster is required as a cofactor.

Functionally, regulatory subunit of the DNA primase complex and component of the DNA polymerase alpha complex (also known as the alpha DNA polymerase-primase complex) which play an essential role in the initiation of DNA synthesis. During the S phase of the cell cycle, the DNA polymerase alpha complex (composed of a catalytic subunit POLA1, an accessory subunit POLA2 and two primase subunits, the catalytic subunit PRIM1 and the regulatory subunit PRIM2) is recruited to DNA at the replicative forks via direct interactions with MCM10 and WDHD1. The primase subunit of the polymerase alpha complex initiates DNA synthesis by oligomerising short RNA primers on both leading and lagging strands. These primers are initially extended by the polymerase alpha catalytic subunit and subsequently transferred to polymerase delta and polymerase epsilon for processive synthesis on the lagging and leading strand, respectively. In the primase complex, both subunits are necessary for the initial di-nucleotide formation, but the extension of the primer depends only on the catalytic subunit. Binds RNA:DNA duplex and coordinates the catalytic activities of PRIM1 and POLA2 during primase-to-polymerase switch. In Homo sapiens (Human), this protein is DNA primase large subunit (PRIM2).